Reading from the N-terminus, the 164-residue chain is CDP-archaeol synthase (164 aa).

4 helical membrane-spanning segments follow: residues 3-23, 55-75, 77-97, and 122-142; these read LTVFFLLIWPPYVANGSAVFA, AIGIATGTVLGYFPNLVYHVI, VFDAFVLSASAVLGDLIGAFI, and FLVYSLFREIPVVYVLAAVVI.

The protein belongs to the CDP-archaeol synthase family. It depends on Mg(2+) as a cofactor.

It is found in the cell membrane. It catalyses the reaction 2,3-bis-O-(geranylgeranyl)-sn-glycerol 1-phosphate + CTP + H(+) = CDP-2,3-bis-O-(geranylgeranyl)-sn-glycerol + diphosphate. It functions in the pathway membrane lipid metabolism; glycerophospholipid metabolism. In terms of biological role, catalyzes the formation of CDP-2,3-bis-(O-geranylgeranyl)-sn-glycerol (CDP-archaeol) from 2,3-bis-(O-geranylgeranyl)-sn-glycerol 1-phosphate (DGGGP) and CTP. This reaction is the third ether-bond-formation step in the biosynthesis of archaeal membrane lipids. This is CDP-archaeol synthase from Pyrobaculum aerophilum (strain ATCC 51768 / DSM 7523 / JCM 9630 / CIP 104966 / NBRC 100827 / IM2).